Here is a 1148-residue protein sequence, read N- to C-terminus: Protocadherin-19 (1148 aa).

An N-terminal signal peptide occupies residues 1–21; sequence MESLLLPVLLLLAILWTQAAA. 6 consecutive Cadherin domains span residues 22 to 129, 130 to 238, 239 to 346, 350 to 453, 454 to 563, and 569 to 672; these read LINL…APSF, PAAQ…NPVF, SEST…PPVI, SVNS…HPHF, SKPY…TPVI, and INGT…QESM. The Extracellular portion of the chain corresponds to 22-678; that stretch reads LINLKYSVEE…QESMGSVNLS (657 aa). Ca(2+) contacts are provided by glutamate 31, glutamate 32, aspartate 88, and aspartate 90. Cysteine 93 and cysteine 99 are joined by a disulfide. The Ca(2+) site is built by aspartate 121, asparagine 123, aspartate 124, asparagine 125, glutamate 140, aspartate 155, aspartate 157, glutamate 199, aspartate 212, aspartate 230, serine 231, asparagine 232, aspartate 233, asparagine 234, and glutamate 249. N-linked (GlcNAc...) asparagine glycosylation is present at asparagine 261. Ca(2+)-binding residues include aspartate 264, aspartate 266, asparagine 270, aspartate 305, glutamate 307, aspartate 338, asparagine 340, aspartate 341, asparagine 342, glutamate 360, aspartate 375, aspartate 377, asparagine 381, aspartate 412, and glutamate 414. A glycan (N-linked (GlcNAc...) asparagine) is linked at asparagine 420. Ca(2+) contacts are provided by aspartate 427, aspartate 445, glutamate 446, asparagine 447, aspartate 448, asparagine 449, glutamate 464, aspartate 479, aspartate 481, asparagine 485, asparagine 522, glutamate 524, and aspartate 537. A glycan (N-linked (GlcNAc...) asparagine) is linked at asparagine 485. N-linked (GlcNAc...) asparagine glycosylation occurs at asparagine 546. Aspartate 555, valine 556, asparagine 557, aspartate 558, and asparagine 559 together coordinate Ca(2+). Residue asparagine 570 is glycosylated (N-linked (GlcNAc...) asparagine). Ca(2+) contacts are provided by aspartate 594, aspartate 596, asparagine 600, and aspartate 646. N-linked (GlcNAc...) asparagine glycosylation occurs at asparagine 676. Residues 679-699 form a helical membrane-spanning segment; the sequence is LIFIIALGSIAGILFVTMIFV. The Cytoplasmic portion of the chain corresponds to 700–1148; it reads AIKCKRDNKE…GVKRLKDIVL (449 aa). Disordered regions lie at residues 901 to 921 and 1100 to 1148; these read GNSL…EHDV and NVNN…DIVL. Basic and acidic residues-rich tracts occupy residues 906 to 921, 1109 to 1123, and 1130 to 1148; these read DSGH…EHDV, SEAE…KVMH, and KEGR…DIVL.

Homodimer; antiparallel. In terms of tissue distribution, moderately expressed in all regions of the brain examined, with lowest levels found in the cerebellum. Moderate expression is also found in ovary, and low expression in all other tissues tested. Also detected in primary skin fibroblast.

Its subcellular location is the cell membrane. Its function is as follows. Calcium-dependent cell-adhesion protein. This Homo sapiens (Human) protein is Protocadherin-19 (PCDH19).